Here is a 111-residue protein sequence, read N- to C-terminus: ASFBZAPPGBSKAGEKIFKTKCAECHTVGRGAGHKQGPNLNGLFGRQSGTTAGYSYSAANKNMAVTWZZKTLYDYLLNPKKYIPGTKMVFPGLKKPZBRADLIAYLKESTA.

A1 is modified (N-acetylalanine). Heme c is bound by residues C22, C25, and H26. K80 bears the N6,N6,N6-trimethyllysine mark. M88 is a binding site for heme c. The residue at position 94 (K94) is an N6,N6,N6-trimethyllysine.

This sequence belongs to the cytochrome c family. Post-translationally, binds 1 heme c group covalently per subunit.

The protein resides in the mitochondrion intermembrane space. In terms of biological role, electron carrier protein. The oxidized form of the cytochrome c heme group can accept an electron from the heme group of the cytochrome c1 subunit of cytochrome reductase. Cytochrome c then transfers this electron to the cytochrome oxidase complex, the final protein carrier in the mitochondrial electron-transport chain. The sequence is that of Cytochrome c from Cannabis sativa (Hemp).